Consider the following 473-residue polypeptide: Ribulose bisphosphate carboxylase large chain 1 (473 aa).

The substrate site is built by N116 and T166. Residue K168 is the Proton acceptor of the active site. K170 lines the substrate pocket. Residues K194, D196, and E197 each contribute to the Mg(2+) site. K194 is subject to N6-carboxylysine. The active-site Proton acceptor is H287. Positions 288, 320, and 372 each coordinate substrate.

This sequence belongs to the RuBisCO large chain family. Type I subfamily. As to quaternary structure, heterohexadecamer of 8 large chains and 8 small chains. It depends on Mg(2+) as a cofactor.

It carries out the reaction 2 (2R)-3-phosphoglycerate + 2 H(+) = D-ribulose 1,5-bisphosphate + CO2 + H2O. It catalyses the reaction D-ribulose 1,5-bisphosphate + O2 = 2-phosphoglycolate + (2R)-3-phosphoglycerate + 2 H(+). RuBisCO catalyzes two reactions: the carboxylation of D-ribulose 1,5-bisphosphate, the primary event in carbon dioxide fixation, as well as the oxidative fragmentation of the pentose substrate. Both reactions occur simultaneously and in competition at the same active site. The chain is Ribulose bisphosphate carboxylase large chain 1 from Nitrobacter winogradskyi (strain ATCC 25391 / DSM 10237 / CIP 104748 / NCIMB 11846 / Nb-255).